The chain runs to 100 residues: Apolipoprotein C-II (100 aa).

Residues methionine 1–alanine 22 form the signal peptide. The segment at serine 66 to methionine 74 is lipid binding. The lipoprotein lipase cofactor stretch occupies residues serine 78–glutamate 100.

This sequence belongs to the apolipoprotein C2 family. In terms of processing, proapolipoprotein C-II is synthesized as a sialic acid containing glycoprotein which is subsequently desialylated prior to its proteolytic processing. Proapolipoprotein C-II, the major form found in plasma undergoes proteolytic cleavage of its N-terminal hexapeptide to generate the mature form apolipoprotein C-II, which occurs as the minor form in plasma.

Its subcellular location is the secreted. Component of chylomicrons, very low-density lipoproteins (VLDL), low-density lipoproteins (LDL), and high-density lipoproteins (HDL) in plasma. Plays an important role in lipoprotein metabolism as an activator of lipoprotein lipase. The sequence is that of Apolipoprotein C-II (APOC2) from Ellobius talpinus (Northern mole vole).